A 288-amino-acid chain; its full sequence is Rhox homeobox family member 2 (288 aa).

The disordered stretch occupies residues Ser16–Pro136. Acidic residues predominate over residues Val39–Pro48. Residues Gly68–Gly80 show a composition bias toward basic and acidic residues. The segment at residues Gln134–Gln193 is a DNA-binding region (homeobox). The Nuclear localization signal motif lies at Arg186 to Ala195.

This sequence belongs to the paired-like homeobox family. PEPP subfamily. In terms of tissue distribution, testis. Not detected in epididymis nor placenta. In testis, mainly expressed in germ cells, but also detected in somatic cells such as Sertoli cells, Leydig cells and peritubular cells.

Its subcellular location is the nucleus. Transcription factor maybe involved in reproductive processes. Modulates expression of target genes encoding proteins involved in processes relevant to spermatogenesis. This is Rhox homeobox family member 2 from Homo sapiens (Human).